A 152-amino-acid polypeptide reads, in one-letter code: Nucleoside diphosphate kinase B (152 aa).

The interval M1–K66 is interaction with AKAP13. Positions 12, 60, 88, 94, 105, and 115 each coordinate ATP. Catalysis depends on H118, which acts as the Pros-phosphohistidine intermediate.

This sequence belongs to the NDK family. In terms of assembly, hexamer of two different chains: An and B (A6, A5B, A4B2, A3B3, A2B4, AB5, B6). Interacts with CAPN8. Interacts with AKAP13. Interacts with ITGB1BP1 (via C-terminal domain region). Interacts with BCL2L10. Requires Mg(2+) as cofactor.

It is found in the cytoplasm. The protein localises to the cell projection. It localises to the lamellipodium. The protein resides in the ruffle. Its subcellular location is the nucleus. The enzyme catalyses a 2'-deoxyribonucleoside 5'-diphosphate + ATP = a 2'-deoxyribonucleoside 5'-triphosphate + ADP. It catalyses the reaction a ribonucleoside 5'-diphosphate + ATP = a ribonucleoside 5'-triphosphate + ADP. The catalysed reaction is ATP + protein L-histidine = ADP + protein N-phospho-L-histidine.. Major role in the synthesis of nucleoside triphosphates other than ATP. The ATP gamma phosphate is transferred to the NDP beta phosphate via a ping-pong mechanism, using a phosphorylated active-site intermediate. Negatively regulates Rho activity by interacting with AKAP13/LBC. Acts as a transcriptional activator of the MYC gene; binds DNA non-specifically. Binds to both single-stranded guanine- and cytosine-rich strands within the nuclease hypersensitive element (NHE) III(1) region of the MYC gene promoter. Does not bind to duplex NHE III(1). Has G-quadruplex (G4) DNA-binding activity, which is independent of its nucleotide-binding and kinase activity. Binds both folded and unfolded G4 with similar low nanomolar affinities. Stabilizes folded G4s regardless of whether they are prefolded or not. Exhibits histidine protein kinase activity. The sequence is that of Nucleoside diphosphate kinase B (NME2) from Pongo abelii (Sumatran orangutan).